The chain runs to 109 residues: MYQLQFINLVYDTTKLTHLEQTNINLFIGNWSNHQLQKSICIRHGDDTSHNQYHILFIDTAHQRIKFSSIDNEEIIYILDYDDTQHILMQTSSKQGIGTSRPIVYERLV.

Residues 97–101 are binds to staphopain B; the sequence is IGTSR.

Belongs to the protease inhibitor I57 (SspC) family. Forms a stable non-covalent complex with prematurely activated/folded SspB.

The protein resides in the cytoplasm. In terms of biological role, specifically inhibits the cysteine protease staphopain B (SspB) by blocking the active site of the enzyme. Probably required to protect cytoplasmic proteins from being degraded by prematurely activated/folded prostaphopain B. Also involved in growth capacity, viability and bacterial morphology. The polypeptide is Staphostatin B (sspC) (Staphylococcus aureus (strain NCTC 8325 / PS 47)).